We begin with the raw amino-acid sequence, 414 residues long: Succinylornithine transaminase (414 aa).

Position 260 is an N6-(pyridoxal phosphate)lysine (Lys-260).

This sequence belongs to the class-III pyridoxal-phosphate-dependent aminotransferase family. AstC subfamily. The cofactor is pyridoxal 5'-phosphate.

The catalysed reaction is N(2)-succinyl-L-ornithine + 2-oxoglutarate = N-succinyl-L-glutamate 5-semialdehyde + L-glutamate. Its pathway is amino-acid degradation; L-arginine degradation via AST pathway; L-glutamate and succinate from L-arginine: step 3/5. Functionally, catalyzes the transamination of N(2)-succinylornithine and alpha-ketoglutarate into N(2)-succinylglutamate semialdehyde and glutamate. Can also act as an acetylornithine aminotransferase. This Yersinia pseudotuberculosis serotype I (strain IP32953) protein is Succinylornithine transaminase.